The sequence spans 516 residues: Na(+)/H(+) antiporter NhaB (516 aa).

12 consecutive transmembrane segments (helical) span residues 23 to 43 (LALI…PFVA), 61 to 80 (CYPL…IGMT), 97 to 117 (LLLM…LFVF), 120 to 140 (LLLG…AAAF), 144 to 164 (FLDA…FYGI), 202 to 222 (LMMH…VGEP), 238 to 258 (FFLR…LTCL), 303 to 323 (ALIG…VGLI), 348 to 368 (TEAL…AVII), 391 to 411 (LFYL…VGTV), 447 to 467 (ATPN…APLI), and 475 to 495 (VWMA…CVEF).

This sequence belongs to the NhaB Na(+)/H(+) (TC 2.A.34) antiporter family.

It localises to the cell inner membrane. It catalyses the reaction 2 Na(+)(in) + 3 H(+)(out) = 2 Na(+)(out) + 3 H(+)(in). Na(+)/H(+) antiporter that extrudes sodium in exchange for external protons. The sequence is that of Na(+)/H(+) antiporter NhaB from Klebsiella pneumoniae subsp. pneumoniae (strain ATCC 700721 / MGH 78578).